Here is a 434-residue protein sequence, read N- to C-terminus: Eukaryotic translation initiation factor 3 subunit E (434 aa).

The 174-residue stretch at 219 to 392 (FFNHPKGRDL…GHVVMGTQPL (174 aa)) folds into the PCI domain.

It belongs to the eIF-3 subunit E family. In terms of assembly, component of the eukaryotic translation initiation factor 3 (eIF-3) complex. The eIF-3 complex interacts with pix. Interacts with mxt.

The protein resides in the cytoplasm. Component of the eukaryotic translation initiation factor 3 (eIF-3) complex, which is involved in protein synthesis of a specialized repertoire of mRNAs and, together with other initiation factors, stimulates binding of mRNA and methionyl-tRNAi to the 40S ribosome. The eIF-3 complex specifically targets and initiates translation of a subset of mRNAs involved in cell proliferation. The chain is Eukaryotic translation initiation factor 3 subunit E (eIF3-S6) from Drosophila virilis (Fruit fly).